Consider the following 415-residue polypeptide: DNA polymerase IV (415 aa).

Positions 15 to 196 (ILHVDMNCFF…LPVGAMHGIG (182 aa)) constitute a UmuC domain. Mg(2+) contacts are provided by D19 and D115. The active site involves E116. The disordered stretch occupies residues 238 to 260 (KGMDDRQVDPSQMGQHKSVGNSM). Positions 246–260 (DPSQMGQHKSVGNSM) are enriched in polar residues.

This sequence belongs to the DNA polymerase type-Y family. Monomer. The cofactor is Mg(2+).

The protein resides in the cytoplasm. The catalysed reaction is DNA(n) + a 2'-deoxyribonucleoside 5'-triphosphate = DNA(n+1) + diphosphate. In terms of biological role, poorly processive, error-prone DNA polymerase involved in untargeted mutagenesis. Copies undamaged DNA at stalled replication forks, which arise in vivo from mismatched or misaligned primer ends. These misaligned primers can be extended by PolIV. Exhibits no 3'-5' exonuclease (proofreading) activity. May be involved in translesional synthesis, in conjunction with the beta clamp from PolIII. The sequence is that of DNA polymerase IV from Bacillus cereus (strain ZK / E33L).